Here is a 644-residue protein sequence, read N- to C-terminus: Chaperone protein DnaK (644 aa).

Residue threonine 199 is modified to Phosphothreonine; by autocatalysis. The segment at 602–644 is disordered; the sequence is IYAKKSSEGQTAQGQTQSQESTKPAEEGVVDAEFEEVKEEDKK. The span at 609–623 shows a compositional bias: polar residues; that stretch reads EGQTAQGQTQSQEST. Acidic residues predominate over residues 629–644; that stretch reads GVVDAEFEEVKEEDKK.

It belongs to the heat shock protein 70 family.

In terms of biological role, acts as a chaperone. The sequence is that of Chaperone protein DnaK from Legionella pneumophila (strain Lens).